A 370-amino-acid polypeptide reads, in one-letter code: Actin-related protein 2/3 complex subunit 1A (370 aa).

WD repeat units follow at residues 6-45 (FLLE…WVKA), 50-89 (EHNG…WKPT), 140-179 (PIRS…VDEK), 202-241 (GTGG…QVST), 244-284 (TEFL…TFVS), and 322-365 (LHQN…SSIQ).

It belongs to the WD repeat ARPC1 family. In terms of assembly, probable component of the Arp2/3 complex in which it may replace ARPC1B. In addition to its role in the cytoplasmic cytoskeleton, the Arp2/3 complex also promotes actin polymerization in the nucleus, thereby regulating gene transcription and repair of damaged DNA.

The protein localises to the cytoplasm. The protein resides in the cytoskeleton. It localises to the nucleus. Its function is as follows. Probably functions as a component of the Arp2/3 complex which is involved in regulation of actin polymerization and together with an activating nucleation-promoting factor (NPF) mediates the formation of branched actin networks. The sequence is that of Actin-related protein 2/3 complex subunit 1A (ARPC1A) from Homo sapiens (Human).